The primary structure comprises 248 residues: 3-deoxy-manno-octulosonate cytidylyltransferase (248 aa).

The protein belongs to the KdsB family.

It is found in the cytoplasm. The catalysed reaction is 3-deoxy-alpha-D-manno-oct-2-ulosonate + CTP = CMP-3-deoxy-beta-D-manno-octulosonate + diphosphate. Its pathway is nucleotide-sugar biosynthesis; CMP-3-deoxy-D-manno-octulosonate biosynthesis; CMP-3-deoxy-D-manno-octulosonate from 3-deoxy-D-manno-octulosonate and CTP: step 1/1. It functions in the pathway bacterial outer membrane biogenesis; lipopolysaccharide biosynthesis. Functionally, activates KDO (a required 8-carbon sugar) for incorporation into bacterial lipopolysaccharide in Gram-negative bacteria. The chain is 3-deoxy-manno-octulosonate cytidylyltransferase from Escherichia fergusonii (strain ATCC 35469 / DSM 13698 / CCUG 18766 / IAM 14443 / JCM 21226 / LMG 7866 / NBRC 102419 / NCTC 12128 / CDC 0568-73).